The primary structure comprises 68 residues: Toxin Cg2 (68 aa).

In terms of domain architecture, LCN-type CS-alpha/beta spans 1–66 (KDGYLVNKST…VYPIPGKTCS (66 aa)). Cystine bridges form between C12-C65, C16-C41, C25-C46, and C29-C48.

Belongs to the long (4 C-C) scorpion toxin superfamily. Sodium channel inhibitor family. Expressed by the venom gland.

It is found in the secreted. In terms of biological role, binds to sodium channels (Nav) and inhibits them. The sequence is that of Toxin Cg2 from Centruroides gracilis (Slenderbrown scorpion).